We begin with the raw amino-acid sequence, 322 residues long: Biotin synthase (322 aa).

The 228-residue stretch at 39 to 266 (NQVQISSLLN…KSVVRLSAGR (228 aa)) folds into the Radical SAM core domain. 3 residues coordinate [4Fe-4S] cluster: C54, C58, and C61. The [2Fe-2S] cluster site is built by C98, C129, C189, and R261.

This sequence belongs to the radical SAM superfamily. Biotin synthase family. As to quaternary structure, homodimer. Requires [4Fe-4S] cluster as cofactor. [2Fe-2S] cluster is required as a cofactor.

The catalysed reaction is (4R,5S)-dethiobiotin + (sulfur carrier)-SH + 2 reduced [2Fe-2S]-[ferredoxin] + 2 S-adenosyl-L-methionine = (sulfur carrier)-H + biotin + 2 5'-deoxyadenosine + 2 L-methionine + 2 oxidized [2Fe-2S]-[ferredoxin]. It functions in the pathway cofactor biosynthesis; biotin biosynthesis; biotin from 7,8-diaminononanoate: step 2/2. Catalyzes the conversion of dethiobiotin (DTB) to biotin by the insertion of a sulfur atom into dethiobiotin via a radical-based mechanism. In Vesicomyosocius okutanii subsp. Calyptogena okutanii (strain HA), this protein is Biotin synthase.